Reading from the N-terminus, the 879-residue chain is Alanine--tRNA ligase (879 aa).

Zn(2+) contacts are provided by His566, His570, Cys668, and His672.

It belongs to the class-II aminoacyl-tRNA synthetase family. It depends on Zn(2+) as a cofactor.

The protein resides in the cytoplasm. It catalyses the reaction tRNA(Ala) + L-alanine + ATP = L-alanyl-tRNA(Ala) + AMP + diphosphate. Functionally, catalyzes the attachment of alanine to tRNA(Ala) in a two-step reaction: alanine is first activated by ATP to form Ala-AMP and then transferred to the acceptor end of tRNA(Ala). Also edits incorrectly charged Ser-tRNA(Ala) and Gly-tRNA(Ala) via its editing domain. This is Alanine--tRNA ligase from Clostridium tetani (strain Massachusetts / E88).